A 352-amino-acid polypeptide reads, in one-letter code: Ubiquitin thioesterase otulin (352 aa).

Residues 1-48 (MSRGTMPQPEAWPGASCAETPAREAAATARDGGKAAASGQPRPEMQCP) are disordered. Over residues 18 to 37 (AETPAREAAATARDGGKAAA) the composition is skewed to low complexity. Residues 52–57 (EEDMYR) carry the PIM motif motif. Position 56 is a phosphotyrosine (Tyr56). Linear diubiquitin binding regions lie at residues 95–96 (EW) and 124–126 (RGD). In terms of domain architecture, OTU spans 118-346 (TSIRRVRGDN…DRHYNIPVRV (229 aa)). Asp126 is a catalytic residue. The active-site Nucleophile is the Cys129. Linear diubiquitin binding regions lie at residues 255 to 259 (FFSVL), 283 to 289 (TGGLEQV), and 336 to 338 (DDR). The active site involves His339.

Belongs to the peptidase C65 family. Otulin subfamily. In terms of assembly, interacts (via the PUB domain) with RNF31 (via the PIM motif); the interaction is direct. Interacts with DVL2. Post-translationally, ubiquitinated. Acetylated. In terms of processing, phosphorylated. Phosphorylation at Tyr-56 prevents interaction with RNF31; dephosphorylation promotes interaction with RNF31 and the LUBAC complex.

It localises to the cytoplasm. It carries out the reaction Thiol-dependent hydrolysis of ester, thioester, amide, peptide and isopeptide bonds formed by the C-terminal Gly of ubiquitin (a 76-residue protein attached to proteins as an intracellular targeting signal).. Functionally, deubiquitinase that specifically removes linear ('Met-1'-linked) polyubiquitin chains to substrates and acts as a regulator of angiogenesis and innate immune response. Required during angiogenesis, craniofacial and neuronal development by regulating the canonical Wnt signaling together with the LUBAC complex. Acts as a negative regulator of NF-kappa-B by regulating the activity of the LUBAC complex. OTULIN function is mainly restricted to homeostasis of the LUBAC complex: acts by removing 'Met-1'-linked autoubiquitination of the LUBAC complex, thereby preventing inactivation of the LUBAC complex. Acts as a key negative regulator of inflammation by restricting spontaneous inflammation and maintaining immune homeostasis. In myeloid cell, required to prevent unwarranted secretion of cytokines leading to inflammation and autoimmunity by restricting linear polyubiquitin formation. Plays a role in innate immune response by restricting linear polyubiquitin formation on LUBAC complex in response to NOD2 stimulation, probably to limit NOD2-dependent pro-inflammatory signaling. This chain is Ubiquitin thioesterase otulin, found in Homo sapiens (Human).